Here is a 285-residue protein sequence, read N- to C-terminus: ATP phosphoribosyltransferase (285 aa).

It belongs to the ATP phosphoribosyltransferase family. Long subfamily. It depends on Mg(2+) as a cofactor.

It localises to the cytoplasm. The enzyme catalyses 1-(5-phospho-beta-D-ribosyl)-ATP + diphosphate = 5-phospho-alpha-D-ribose 1-diphosphate + ATP. The protein operates within amino-acid biosynthesis; L-histidine biosynthesis; L-histidine from 5-phospho-alpha-D-ribose 1-diphosphate: step 1/9. Feedback inhibited by histidine. In terms of biological role, catalyzes the condensation of ATP and 5-phosphoribose 1-diphosphate to form N'-(5'-phosphoribosyl)-ATP (PR-ATP). Has a crucial role in the pathway because the rate of histidine biosynthesis seems to be controlled primarily by regulation of HisG enzymatic activity. The sequence is that of ATP phosphoribosyltransferase from Streptomyces coelicolor (strain ATCC BAA-471 / A3(2) / M145).